The primary structure comprises 157 residues: Ribosomal RNA large subunit methyltransferase H (157 aa).

Residues L73, G105, and 124–129 contribute to the S-adenosyl-L-methionine site; that span reads MSKMTF.

This sequence belongs to the RNA methyltransferase RlmH family. Homodimer.

The protein resides in the cytoplasm. The catalysed reaction is pseudouridine(1915) in 23S rRNA + S-adenosyl-L-methionine = N(3)-methylpseudouridine(1915) in 23S rRNA + S-adenosyl-L-homocysteine + H(+). Specifically methylates the pseudouridine at position 1915 (m3Psi1915) in 23S rRNA. This chain is Ribosomal RNA large subunit methyltransferase H, found in Bacteroides fragilis (strain ATCC 25285 / DSM 2151 / CCUG 4856 / JCM 11019 / LMG 10263 / NCTC 9343 / Onslow / VPI 2553 / EN-2).